The sequence spans 160 residues: D-aminoacyl-tRNA deacylase (160 aa).

The Gly-cisPro motif, important for rejection of L-amino acids signature appears at 137 to 138 (GP).

The protein belongs to the DTD family. As to quaternary structure, homodimer.

It is found in the cytoplasm. It catalyses the reaction glycyl-tRNA(Ala) + H2O = tRNA(Ala) + glycine + H(+). The catalysed reaction is a D-aminoacyl-tRNA + H2O = a tRNA + a D-alpha-amino acid + H(+). Its function is as follows. An aminoacyl-tRNA editing enzyme that deacylates mischarged D-aminoacyl-tRNAs. Also deacylates mischarged glycyl-tRNA(Ala), protecting cells against glycine mischarging by AlaRS. Acts via tRNA-based rather than protein-based catalysis; rejects L-amino acids rather than detecting D-amino acids in the active site. By recycling D-aminoacyl-tRNA to D-amino acids and free tRNA molecules, this enzyme counteracts the toxicity associated with the formation of D-aminoacyl-tRNA entities in vivo and helps enforce protein L-homochirality. This chain is D-aminoacyl-tRNA deacylase, found in Chloroflexus aurantiacus (strain ATCC 29364 / DSM 637 / Y-400-fl).